The following is a 350-amino-acid chain: S-adenosylmethionine:tRNA ribosyltransferase-isomerase (350 aa).

Belongs to the QueA family. As to quaternary structure, monomer.

Its subcellular location is the cytoplasm. The enzyme catalyses 7-aminomethyl-7-carbaguanosine(34) in tRNA + S-adenosyl-L-methionine = epoxyqueuosine(34) in tRNA + adenine + L-methionine + 2 H(+). It functions in the pathway tRNA modification; tRNA-queuosine biosynthesis. Its function is as follows. Transfers and isomerizes the ribose moiety from AdoMet to the 7-aminomethyl group of 7-deazaguanine (preQ1-tRNA) to give epoxyqueuosine (oQ-tRNA). The protein is S-adenosylmethionine:tRNA ribosyltransferase-isomerase of Bacillus cereus (strain ZK / E33L).